The following is a 286-amino-acid chain: B3 domain-containing protein REM20 (286 aa).

The TF-B3 DNA-binding region spans 9 to 102; sequence PRFFKVFLVE…TFEVSVFDRW (94 aa). Positions 117-161 are disordered; that stretch reads SDSDSDSVVEDEKDSTDVVEDDDDEDEDEDEDDDGSFDEDEEISQ. Residues 119 to 159 are compositionally biased toward acidic residues; that stretch reads SDSDSVVEDEKDSTDVVEDDDDEDEDEDEDDDGSFDEDEEI.

It is found in the nucleus. This is B3 domain-containing protein REM20 (REM20) from Arabidopsis thaliana (Mouse-ear cress).